We begin with the raw amino-acid sequence, 71 residues long: Protein PSY2 (71 aa).

The signal sequence occupies residues 1 to 20 (MSFGTRLLLFLILTLPLVTS). The propeptide occupies 21 to 46 (SSPNTLHVSGIVKTGTTSRFLMMTIE). Tyr-48 carries the post-translational modification Sulfotyrosine. Residues 50-71 (DPSANTRHDPSVPTNAKADTTP) form a disordered region. The segment covering 61 to 71 (VPTNAKADTTP) has biased composition (polar residues). Position 62 is a 4-hydroxyproline (Pro-62). Pro-62 carries O-linked (Ara...) hydroxyproline glycosylation. Residues 65-71 (AKADTTP) constitute a propeptide that is removed on maturation.

This sequence belongs to the sulfated-peptide plant hormone family. The sulfation and the glycosylation are required for full activity.

The protein resides in the secreted. Its function is as follows. Promotes cellular proliferation and expansion. This Arabidopsis thaliana (Mouse-ear cress) protein is Protein PSY2 (PSY2).